Consider the following 1068-residue polypeptide: MSVILNASVNTKSAVEYRTISSTQSHLAEEQSERLHKWISKDQLEKLHAAFLNTPERHVGIDELRIILEELDITFNDSMYTRLFLKINQNRDFKVDWNEFVSYLIFGFQEEDPSSQKESLILPISGPPMVRKSEHRSAICCLALLKAKSDQVPIDEVTETINFSFGGEDSPEASGMWVTASHEGMMRFWTSHMEPIRTASSESIVSTYAFYNNGKVHSKLILGDYAGNVRILSYSPHLRGPFQAKPGAALIEVIWSDVLKGKIPQFFPKEYINLHNEMISCVYFSLHMNALFASAEYRNTKKYRGRCPGMIMVNYDERSNFRIPLGVSTFFVAESHNIVVTGGPDTFVRIWDVYIPTEPSAILTGHNGGIVLVFVQPEENKVYSVDYQKIIKVWDLHEHTLLQTYGDLVRLIHHSETDMTYYYHSHLQELVVAGRKLISIKCCPRVRVDLADGNTHAAPVSVVLYNRLFRNVVSCGLDSYIIVWDPWTGRRKIIMKSCHTKMIYGEIIDIEITAACFDPLEQFLLTGARDGSLKIWNYNNAVVVRNMSIMPDQEVTAVIWVVDRILPMGWDWQVTEFNDVVGREYGDPKKWPKFHTDDITCADVKLGEGVVTATYSGEIIFWKLETGQPYRRYSVMDPTRFIELKLTAEEEKFIRQSKRLASRPTPGNHGLQMGRAGRSTVLNRPEDNRDYGTDIPISVQAVLFLQTRPQTLKHGSVFISLDTGFIQVYSHHQRGGYMVEFLAVHKTGDCVLTMCTDRKNRYLYTGTAFGYIKVWHIENFCVPETEKIHVCMPKLRLEFIFLRKELFLTRAKRAVRNQAEPLLVSSYKGHLKAINSISFINLPKIIFTGSHDYSCRLWTQGGRYLGTLGTVLPWSKLTPFERAGNDNHLYRMPPDIKKVASSTTLKVISGIQAETRIKISDGKPVEDREEDTAQTEDVTELRKLLDKPVKEPILGKHFELPGRSVLDQHIELDTTQSYIAVFTQLKVHSTEMLERLPTPAVVSRVQTENYLDHYIPVEGKVDVSGSAINIKQPSRRRSDKTNDTRNVRTPRARDLIALEMSSSHASQS.

7 WD repeats span residues 155–199 (DEVT…IRTA), 201–242 (SESI…RGPF), 322–361 (RIPL…EPSA), 365–404 (GHNG…LLQT), 455–494 (THAA…RKII), 507–546 (IIDI…VVRN), and 594–634 (FHTD…RRYS). Positions 657 to 687 (SKRLASRPTPGNHGLQMGRAGRSTVLNRPED) are disordered. WD repeat units lie at residues 746-785 (KTGD…VPET) and 829-868 (GHLK…LGTL). Positions 1026–1068 (SAINIKQPSRRRSDKTNDTRNVRTPRARDLIALEMSSSHASQS) are disordered. Positions 1039–1056 (DKTNDTRNVRTPRARDLI) are enriched in basic and acidic residues.

The sequence is that of WD repeat-containing protein on Y chromosome from Drosophila yakuba (Fruit fly).